The following is a 260-amino-acid chain: Segregation and condensation protein A (260 aa).

The protein belongs to the ScpA family. Component of a cohesin-like complex composed of ScpA, ScpB and the Smc homodimer, in which ScpA and ScpB bind to the head domain of Smc. The presence of the three proteins is required for the association of the complex with DNA.

It is found in the cytoplasm. Functionally, participates in chromosomal partition during cell division. May act via the formation of a condensin-like complex containing Smc and ScpB that pull DNA away from mid-cell into both cell halves. This chain is Segregation and condensation protein A, found in Halalkalibacterium halodurans (strain ATCC BAA-125 / DSM 18197 / FERM 7344 / JCM 9153 / C-125) (Bacillus halodurans).